A 1343-amino-acid chain; its full sequence is DNA-directed RNA polymerase subunit beta (1343 aa).

This sequence belongs to the RNA polymerase beta chain family. As to quaternary structure, the RNAP catalytic core consists of 2 alpha, 1 beta, 1 beta' and 1 omega subunit. When a sigma factor is associated with the core the holoenzyme is formed, which can initiate transcription.

It catalyses the reaction RNA(n) + a ribonucleoside 5'-triphosphate = RNA(n+1) + diphosphate. In terms of biological role, DNA-dependent RNA polymerase catalyzes the transcription of DNA into RNA using the four ribonucleoside triphosphates as substrates. This Haemophilus influenzae (strain ATCC 51907 / DSM 11121 / KW20 / Rd) protein is DNA-directed RNA polymerase subunit beta.